A 498-amino-acid polypeptide reads, in one-letter code: Lysine--tRNA ligase (498 aa).

The Mg(2+) site is built by Glu407 and Glu414.

The protein belongs to the class-II aminoacyl-tRNA synthetase family. Homodimer. It depends on Mg(2+) as a cofactor.

The protein resides in the cytoplasm. The catalysed reaction is tRNA(Lys) + L-lysine + ATP = L-lysyl-tRNA(Lys) + AMP + diphosphate. This is Lysine--tRNA ligase (lysS) from Rhizobium meliloti (strain 1021) (Ensifer meliloti).